A 370-amino-acid chain; its full sequence is Cyclin-A3-4 (370 aa).

This sequence belongs to the cyclin family. Cyclin AB subfamily. As to quaternary structure, interacts with FZR2/CCS52A1, FZR1/CCS52A2 and FZR3/CCS52B.

This is Cyclin-A3-4 (CYCA3-4) from Arabidopsis thaliana (Mouse-ear cress).